Reading from the N-terminus, the 401-residue chain is Methyltransferase cfoC (401 aa).

Aspartate 268 lines the S-adenosyl-L-methionine pocket. Histidine 308 acts as the Proton acceptor in catalysis.

This sequence belongs to the class I-like SAM-binding methyltransferase superfamily. Cation-independent O-methyltransferase family.

It participates in secondary metabolite biosynthesis; flavonoid biosynthesis. Functionally, methyltransferase; part of the gene cluster that mediates the biosynthesis of chlorflavonin, a fungal flavonoid with acetolactate synthase inhibitory activity. Within the pathway, cfoC is responsible for the methylation at position C8-OH of flavonoid. The pathway begins with the PKS-NRPS hybrid synthetase cfoA that uses benzoic acid or p-hydroxybenzoic acid as a starter unit with four rounds of chain elongation using malonyl-CoA to form the chalcone skeleton. Then, a new type of chalcone isomerase, cfoK, catalyzes the conversion of the chalcone into a flavanone by a histidine-mediated oxa-Michael addition mechanism. The desaturation of flavanone to flavone is catalyzed by a new type of flavone synthase, the flavin mononucleotide (FMN)-dependent oxidoreductase cfoJ. Monooxygenases cfoF, cfoG, and P450 cfoH are responsible for the hydroxylation of the flavonoid skeleton at sites C3, C8, and C2', respectively. Like cfoF, the dehydratase cfoI also plays a role in the hydroxylation of position C3. Methyltransferases cfoB, cfoC, and cfoD then catalyze the methylation of C7-OH, C8-OH, and C3-OH, respectively. Finally, the monooxygenase cfoE is responsible for the chlorination of flavonoid at position C3'. The protein is Methyltransferase cfoC of Aspergillus candidus.